A 458-amino-acid polypeptide reads, in one-letter code: Exodeoxyribonuclease 7 large subunit (458 aa).

It belongs to the XseA family. In terms of assembly, heterooligomer composed of large and small subunits.

It is found in the cytoplasm. The catalysed reaction is Exonucleolytic cleavage in either 5'- to 3'- or 3'- to 5'-direction to yield nucleoside 5'-phosphates.. Its function is as follows. Bidirectionally degrades single-stranded DNA into large acid-insoluble oligonucleotides, which are then degraded further into small acid-soluble oligonucleotides. This is Exodeoxyribonuclease 7 large subunit from Sodalis glossinidius (strain morsitans).